The primary structure comprises 536 residues: Probable galacturonosyltransferase 10 (536 aa).

Residues 1-16 (MRRRGGDSFRRAGRRK) lie on the Cytoplasmic side of the membrane. The chain crosses the membrane as a helical; Signal-anchor for type II membrane protein span at residues 17–37 (ISNVVWWVLSGIALLLFFLIL). The Lumenal segment spans residues 38–536 (SKAGHIEPRP…SPFMQQCNFH (499 aa)). N-linked (GlcNAc...) asparagine glycosylation is found at asparagine 64, asparagine 246, asparagine 300, asparagine 403, and asparagine 436.

The protein belongs to the glycosyltransferase 8 family. Expressed in roots, inflorescences, siliques, leaves and stems.

It is found in the golgi apparatus membrane. It functions in the pathway glycan metabolism; pectin biosynthesis. Its function is as follows. May be involved in pectin and/or xylans biosynthesis in cell walls. This Arabidopsis thaliana (Mouse-ear cress) protein is Probable galacturonosyltransferase 10 (GAUT10).